We begin with the raw amino-acid sequence, 240 residues long: Methylthioribulose-1-phosphate dehydratase (240 aa).

Cysteine 100 serves as a coordination point for substrate. Zn(2+)-binding residues include histidine 117 and histidine 119. Glutamate 146 functions as the Proton donor/acceptor in the catalytic mechanism. Histidine 202 lines the Zn(2+) pocket.

The protein belongs to the aldolase class II family. MtnB subfamily. Requires Zn(2+) as cofactor.

It is found in the cytoplasm. It carries out the reaction 5-(methylsulfanyl)-D-ribulose 1-phosphate = 5-methylsulfanyl-2,3-dioxopentyl phosphate + H2O. Its pathway is amino-acid biosynthesis; L-methionine biosynthesis via salvage pathway; L-methionine from S-methyl-5-thio-alpha-D-ribose 1-phosphate: step 2/6. Its function is as follows. Catalyzes the dehydration of methylthioribulose-1-phosphate (MTRu-1-P) into 2,3-diketo-5-methylthiopentyl-1-phosphate (DK-MTP-1-P). This is Methylthioribulose-1-phosphate dehydratase from Emericella nidulans (strain FGSC A4 / ATCC 38163 / CBS 112.46 / NRRL 194 / M139) (Aspergillus nidulans).